The primary structure comprises 471 residues: L-amino acid dehydrogenase (471 aa).

Gly-31 lines the Mg(2+) pocket. Ser-33 serves as a coordination point for FAD. Gly-34 provides a ligand contact to Mg(2+). Residues Glu-52, Arg-60, and Val-256 each contribute to the FAD site. Ala-283 contributes to the Mg(2+) binding site. An FAD-binding site is contributed by Phe-453.

This sequence belongs to the flavin monoamine oxidase family. Requires FAD as cofactor. It depends on Mg(2+) as a cofactor.

It localises to the cellular thylakoid membrane. The catalysed reaction is a plastoquinone + an L-alpha-amino acid + H2O = a plastoquinol + a 2-oxocarboxylate + NH4(+). The enzyme catalyses a plastoquinone + L-arginine + H2O = a plastoquinol + 5-guanidino-2-oxopentanoate + NH4(+). Its pathway is amino-acid degradation; L-arginine degradation. Inhibited by Ca(2+) and other cations such as Ni(2+), Co(2+) and Zn(2+). The inhibition by o-phenanthroline and salicylhydroxamic acid suggests the presence of a metal cofactor besides FAD in the enzyme. The L-arginine-stimulated O(2) consumption involving slr0782 is inhibited by inhibitors of the respiratory electron transport chain, such as KCN and 2,5-dibromo-3-methyl-6-isopropyl-p-benzoquinone, which indicates a participation of the cytochrome b6/f complex and of a cytochrome oxidase. Functionally, L-amino acid dehydrogenase with broad substrate specificity. Catalyzes the oxidative deamination of various L-amino acids, L-Arg and L-Cys being the best substrates in vitro. Likely functions mainly as an L-arginine dehydrogenase in vivo. Probably feeds electrons from L-arginine oxidation and also from the oxidation of other L-amino acids into the respiratory electron transport chain associated to the thylakoid membrane, and does not directly interact with molecular oxygen but donates electrons to the plastoquinone pool. Cannot use D-amino acids as substrates. This Synechocystis sp. (strain ATCC 27184 / PCC 6803 / Kazusa) protein is L-amino acid dehydrogenase.